We begin with the raw amino-acid sequence, 220 residues long: Fructose-6-phosphate aldolase (220 aa).

The Schiff-base intermediate with substrate role is filled by lysine 85.

The protein belongs to the transaldolase family. Type 3A subfamily. In terms of assembly, homodecamer.

It is found in the cytoplasm. It carries out the reaction beta-D-fructose 6-phosphate = dihydroxyacetone + D-glyceraldehyde 3-phosphate. Functionally, catalyzes the reversible formation of fructose 6-phosphate from dihydroxyacetone and D-glyceraldehyde 3-phosphate via an aldolization reaction. The sequence is that of Fructose-6-phosphate aldolase from Salmonella arizonae (strain ATCC BAA-731 / CDC346-86 / RSK2980).